Here is a 257-residue protein sequence, read N- to C-terminus: Acyl-[acyl-carrier-protein]--UDP-N-acetylglucosamine O-acyltransferase (257 aa).

The protein belongs to the transferase hexapeptide repeat family. LpxA subfamily. Homotrimer.

It localises to the cytoplasm. The enzyme catalyses a (3R)-hydroxyacyl-[ACP] + UDP-N-acetyl-alpha-D-glucosamine = a UDP-3-O-[(3R)-3-hydroxyacyl]-N-acetyl-alpha-D-glucosamine + holo-[ACP]. The protein operates within glycolipid biosynthesis; lipid IV(A) biosynthesis; lipid IV(A) from (3R)-3-hydroxytetradecanoyl-[acyl-carrier-protein] and UDP-N-acetyl-alpha-D-glucosamine: step 1/6. Functionally, involved in the biosynthesis of lipid A, a phosphorylated glycolipid that anchors the lipopolysaccharide to the outer membrane of the cell. This chain is Acyl-[acyl-carrier-protein]--UDP-N-acetylglucosamine O-acyltransferase, found in Fusobacterium nucleatum subsp. nucleatum (strain ATCC 25586 / DSM 15643 / BCRC 10681 / CIP 101130 / JCM 8532 / KCTC 2640 / LMG 13131 / VPI 4355).